Reading from the N-terminus, the 304-residue chain is PTB domain-containing engulfment adapter protein 1 (304 aa).

T16 carries the phosphothreonine modification. Residues 21-176 (SKHYIPYNAK…AGMQKRIQDL (156 aa)) form the PID domain. Residues 159-200 (DVETRKQIAGMQKRIQDLETENMELKNKVQDLESRLRTTQVS) are a coiled coil. A Phosphoserine modification is found at S223.

Belongs to the ced-6 family. As to quaternary structure, homodimer. Interacts with clathrin and MEGF10. Interacts with GDP-bound ARF6, but not with GTP-bound ARF6. Part of a complex composed of GULP1, ACAP1 and ARF6. Interacts with ACAP1, LRP1 and STAB2. As to expression, detected throughout the brain, particularly in Purkinje cells, hippocampal and cortical neurons (at protein level).

Its subcellular location is the cytoplasm. Its function is as follows. Modulates cellular glycosphingolipid and cholesterol transport. May play a role in the internalization of various LRP1 ligands, such as PSAP. May function as an adapter protein. Required for efficient phagocytosis of apoptotic cells. Increases cellular levels of GTP-bound ARF6. This Mus musculus (Mouse) protein is PTB domain-containing engulfment adapter protein 1 (Gulp1).